A 107-amino-acid polypeptide reads, in one-letter code: Large ribosomal subunit protein uL24 (107 aa).

This sequence belongs to the universal ribosomal protein uL24 family. As to quaternary structure, part of the 50S ribosomal subunit.

Its function is as follows. One of two assembly initiator proteins, it binds directly to the 5'-end of the 23S rRNA, where it nucleates assembly of the 50S subunit. In terms of biological role, one of the proteins that surrounds the polypeptide exit tunnel on the outside of the subunit. This chain is Large ribosomal subunit protein uL24, found in Thermotoga neapolitana (strain ATCC 49049 / DSM 4359 / NBRC 107923 / NS-E).